The following is a 264-amino-acid chain: Small ribosomal subunit protein uS2 (264 aa).

Residues 233-264 (AQTQAGGKAEQEAPATEEAADAQTEEAATPAE) are disordered.

It belongs to the universal ribosomal protein uS2 family.

In Psychrobacter arcticus (strain DSM 17307 / VKM B-2377 / 273-4), this protein is Small ribosomal subunit protein uS2.